Here is a 609-residue protein sequence, read N- to C-terminus: uncharacterized protein (609 aa).

The protein belongs to the NodU/CmcH family.

This is an uncharacterized protein from Methanocaldococcus jannaschii (strain ATCC 43067 / DSM 2661 / JAL-1 / JCM 10045 / NBRC 100440) (Methanococcus jannaschii).